The sequence spans 338 residues: Nicotinate-nucleotide--dimethylbenzimidazole phosphoribosyltransferase (338 aa).

Glu305 serves as the catalytic Proton acceptor.

Belongs to the CobT family. As to quaternary structure, homodimer.

It carries out the reaction 5,6-dimethylbenzimidazole + nicotinate beta-D-ribonucleotide = alpha-ribazole 5'-phosphate + nicotinate + H(+). Its pathway is nucleoside biosynthesis; alpha-ribazole biosynthesis; alpha-ribazole from 5,6-dimethylbenzimidazole: step 1/2. In terms of biological role, catalyzes the synthesis of alpha-ribazole-5'-phosphate from nicotinate mononucleotide (NAMN) and 5,6-dimethylbenzimidazole (DMB). This is Nicotinate-nucleotide--dimethylbenzimidazole phosphoribosyltransferase (cobU) from Sinorhizobium sp.